A 437-amino-acid polypeptide reads, in one-letter code: Epsilon-sarcoglycan (437 aa).

Residues Met1 to Phe317 lie on the Extracellular side of the membrane. A glycan (N-linked (GlcNAc...) asparagine) is linked at Asn200. Residues Leu318–Ile338 traverse the membrane as a helical segment. The Cytoplasmic portion of the chain corresponds to Met339–Ser437. Residues Gln418–Ser437 form a disordered region.

This sequence belongs to the sarcoglycan alpha/epsilon family. In terms of processing, N-glycosylated. Ubiquitinated, leading to its degradation by the proteasome.

It is found in the cell membrane. It localises to the sarcolemma. The protein resides in the cytoplasm. The protein localises to the cytoskeleton. Its subcellular location is the cell projection. It is found in the dendrite. It localises to the golgi apparatus. Its function is as follows. Component of the sarcoglycan complex, a subcomplex of the dystrophin-glycoprotein complex which forms a link between the F-actin cytoskeleton and the extracellular matrix. In Bos taurus (Bovine), this protein is Epsilon-sarcoglycan (SGCE).